We begin with the raw amino-acid sequence, 174 residues long: Interleukin-1 receptor antagonist protein (174 aa).

Positions 1 to 23 (MDIYIHGYLICLLLFLFRSETAC) are cleaved as a signal peptide. An intrachain disulfide couples cysteine 89 to cysteine 139. Asparagine 107 is a glycosylation site (N-linked (GlcNAc...) asparagine).

This sequence belongs to the IL-1 family.

It is found in the secreted. Anti-inflammatory antagonist of interleukin-1 family of proinflammatory cytokines such as interleukin-1beta/IL1B and interleukin-1alpha/IL1A. Protects from immune dysregulation and uncontrolled systemic inflammation triggered by IL1 for a range of innate stimulatory agents such as pathogens. This Bos taurus (Bovine) protein is Interleukin-1 receptor antagonist protein (IL1RN).